The chain runs to 271 residues: 2,3,4,5-tetrahydropyridine-2,6-dicarboxylate N-succinyltransferase (271 aa).

The protein belongs to the transferase hexapeptide repeat family.

The protein resides in the cytoplasm. The catalysed reaction is (S)-2,3,4,5-tetrahydrodipicolinate + succinyl-CoA + H2O = (S)-2-succinylamino-6-oxoheptanedioate + CoA. It participates in amino-acid biosynthesis; L-lysine biosynthesis via DAP pathway; LL-2,6-diaminopimelate from (S)-tetrahydrodipicolinate (succinylase route): step 1/3. This chain is 2,3,4,5-tetrahydropyridine-2,6-dicarboxylate N-succinyltransferase, found in Coxiella burnetii (strain CbuG_Q212) (Coxiella burnetii (strain Q212)).